The sequence spans 351 residues: Phosphoribosylformylglycinamidine cyclo-ligase (351 aa).

Belongs to the AIR synthase family.

It localises to the cytoplasm. The enzyme catalyses 2-formamido-N(1)-(5-O-phospho-beta-D-ribosyl)acetamidine + ATP = 5-amino-1-(5-phospho-beta-D-ribosyl)imidazole + ADP + phosphate + H(+). Its pathway is purine metabolism; IMP biosynthesis via de novo pathway; 5-amino-1-(5-phospho-D-ribosyl)imidazole from N(2)-formyl-N(1)-(5-phospho-D-ribosyl)glycinamide: step 2/2. The sequence is that of Phosphoribosylformylglycinamidine cyclo-ligase from Burkholderia lata (strain ATCC 17760 / DSM 23089 / LMG 22485 / NCIMB 9086 / R18194 / 383).